Here is a 608-residue protein sequence, read N- to C-terminus: Bifunctional lycopene cyclase/phytoene synthase (608 aa).

The interval 1–240 (MSILTYLEFH…LVFATCAIDR (240 aa)) is lycopene beta-cyclase. 7 helical membrane passes run 3-23 (ILTYLEFHLYYTLPVLAALCW), 37-56 (YKFLMLMAASTASIWDNYIV), 80-97 (YMFFIIMTLMTVAFSNFV), 117-137 (LLVRLVPVSALLAITYHAWHL), 150-170 (ILWYACPVLAILWLGAGEYIL), 175-195 (AVLLSIVIPSVYLCWADIVAI), and 218-238 (VEECLFFTLINTVLVFATCAI). Positions 247–608 (LYKSSVQNQN…ARKIKSFFVD (362 aa)) are phytoene synthase.

This sequence in the N-terminal section; belongs to the lycopene beta-cyclase family. The protein in the C-terminal section; belongs to the phytoene/squalene synthase family.

The protein localises to the membrane. It catalyses the reaction all-trans-lycopene = gamma-carotene. The catalysed reaction is gamma-carotene = all-trans-beta-carotene. It carries out the reaction 2 (2E,6E,10E)-geranylgeranyl diphosphate = 15-cis-phytoene + 2 diphosphate. The protein operates within carotenoid biosynthesis; beta-carotene biosynthesis. Its pathway is carotenoid biosynthesis; phytoene biosynthesis; all-trans-phytoene from geranylgeranyl diphosphate: step 1/1. In terms of biological role, bifunctional enzyme that catalyzes the reactions from geranylgeranyl diphosphate to phytoene (phytoene synthase) and lycopene to beta-carotene via the intermediate gamma-carotene (lycopene cyclase). In Blakeslea trispora (Choanephora trispora), this protein is Bifunctional lycopene cyclase/phytoene synthase.